A 279-amino-acid chain; its full sequence is MDKYIRSRDKSNFEKFCRRAREIHGDKYSYDVSCYVNKITTTNIKCNSCGEIFTVTPRRHLSINGGCSNCTSRGGQEYLNKFIRKLTDIHGNKYDYSMIVYKNSKTPIKLKCNQCDIIFEQIPLKLIRSKYHCPVCDFRPDCRIFNYNPKSKISVDEFIKRAKNKHGDDSYDYSEINYVDLNTKVSIRCNKCSVQFEQKPRVHLEHGHGCGTFSRYTNNEWIIFAKITHGDTYDYSRVEFISSSKPVTIGCKIHGWFVQRPTNHIISKIPCKKCRVKNQ.

This is an uncharacterized protein from Acanthamoeba polyphaga mimivirus (APMV).